Consider the following 180-residue polypeptide: Beta-lactoglobulin (180 aa).

Residues 1 to 18 form the signal peptide; that stretch reads MKCLLLALGLALACAAQA. Disulfide bonds link Cys84-Cys178, Cys124-Cys137, and Cys124-Cys139.

Belongs to the calycin superfamily. Lipocalin family. In terms of assembly, under physiological conditions beta-lactoglobulin exists as an equilibrium mixture of monomeric and dimeric forms. Interaction with LMBR1L is controversial. Post-translationally, alternate disulfide bonds occur in equal amounts. In terms of tissue distribution, synthesized in mammary gland and secreted in milk.

The protein localises to the secreted. Its function is as follows. Primary component of whey, it binds retinol and is probably involved in the transport of that molecule. The sequence is that of Beta-lactoglobulin (LGB) from Bubalus bubalis (Domestic water buffalo).